The primary structure comprises 534 residues: Probable protein kinase UbiB (534 aa).

A helical transmembrane segment spans residues aspartate 23–tryptophan 43. Residues arginine 125–leucine 492 form the Protein kinase domain. ATP-binding positions include leucine 131–valine 139 and lysine 153. Aspartate 288 functions as the Proton acceptor in the catalytic mechanism. A run of 2 helical transmembrane segments spans residues tryptophan 490 to glycine 510 and leucine 512 to valine 532.

This sequence belongs to the ABC1 family. UbiB subfamily.

The protein localises to the cell inner membrane. It participates in cofactor biosynthesis; ubiquinone biosynthesis [regulation]. Is probably a protein kinase regulator of UbiI activity which is involved in aerobic coenzyme Q (ubiquinone) biosynthesis. The sequence is that of Probable protein kinase UbiB from Pseudomonas fluorescens (strain SBW25).